A 302-amino-acid polypeptide reads, in one-letter code: Acetylglutamate kinase (302 aa).

Substrate-binding positions include 75–76 (GG), Arg-97, and Asn-198.

It belongs to the acetylglutamate kinase family. ArgB subfamily.

The protein localises to the cytoplasm. It carries out the reaction N-acetyl-L-glutamate + ATP = N-acetyl-L-glutamyl 5-phosphate + ADP. The protein operates within amino-acid biosynthesis; L-arginine biosynthesis; N(2)-acetyl-L-ornithine from L-glutamate: step 2/4. Functionally, catalyzes the ATP-dependent phosphorylation of N-acetyl-L-glutamate. The sequence is that of Acetylglutamate kinase from Leifsonia xyli subsp. xyli (strain CTCB07).